The chain runs to 378 residues: Succinyl-diaminopimelate desuccinylase (378 aa).

Position 67 (H67) interacts with Zn(2+). D69 is an active-site residue. Residue D100 participates in Zn(2+) binding. The active-site Proton acceptor is E134. Zn(2+)-binding residues include E135, E163, and H349.

Belongs to the peptidase M20A family. DapE subfamily. As to quaternary structure, homodimer. Requires Zn(2+) as cofactor. Co(2+) is required as a cofactor.

It catalyses the reaction N-succinyl-(2S,6S)-2,6-diaminopimelate + H2O = (2S,6S)-2,6-diaminopimelate + succinate. The protein operates within amino-acid biosynthesis; L-lysine biosynthesis via DAP pathway; LL-2,6-diaminopimelate from (S)-tetrahydrodipicolinate (succinylase route): step 3/3. Catalyzes the hydrolysis of N-succinyl-L,L-diaminopimelic acid (SDAP), forming succinate and LL-2,6-diaminopimelate (DAP), an intermediate involved in the bacterial biosynthesis of lysine and meso-diaminopimelic acid, an essential component of bacterial cell walls. The protein is Succinyl-diaminopimelate desuccinylase of Pasteurella multocida (strain Pm70).